Consider the following 213-residue polypeptide: ATP phosphoribosyltransferase (213 aa).

The protein belongs to the ATP phosphoribosyltransferase family. Short subfamily. In terms of assembly, heteromultimer composed of HisG and HisZ subunits.

It localises to the cytoplasm. It catalyses the reaction 1-(5-phospho-beta-D-ribosyl)-ATP + diphosphate = 5-phospho-alpha-D-ribose 1-diphosphate + ATP. It functions in the pathway amino-acid biosynthesis; L-histidine biosynthesis; L-histidine from 5-phospho-alpha-D-ribose 1-diphosphate: step 1/9. In terms of biological role, catalyzes the condensation of ATP and 5-phosphoribose 1-diphosphate to form N'-(5'-phosphoribosyl)-ATP (PR-ATP). Has a crucial role in the pathway because the rate of histidine biosynthesis seems to be controlled primarily by regulation of HisG enzymatic activity. The polypeptide is ATP phosphoribosyltransferase (Teredinibacter turnerae (strain ATCC 39867 / T7901)).